The primary structure comprises 142 residues: SPbeta prophage-derived deoxyuridine 5'-triphosphate nucleotidohydrolase YosS (142 aa).

DUMP is bound by residues Ser-62 and Asn-74. Asp-80 functions as the Proton acceptor in the catalytic mechanism. Tyr-83 and Phe-91 together coordinate dUMP.

This sequence belongs to the dUTPase family. Homotrimer. Mg(2+) serves as cofactor.

The catalysed reaction is dUTP + H2O = dUMP + diphosphate + H(+). The protein operates within pyrimidine metabolism; dUMP biosynthesis; dUMP from dCTP (dUTP route): step 2/2. Its function is as follows. Involved in nucleotide metabolism: produces dUMP, the immediate precursor of thymidine nucleotides and decreases the intracellular concentration of dUTP, so that uracil cannot be incorporated into DNA. The Ser-62 side chain changes its position upon ligand-binding to make contacts with the nucleotide phosphates. This Bacillus subtilis (strain 168) protein is SPbeta prophage-derived deoxyuridine 5'-triphosphate nucleotidohydrolase YosS.